Consider the following 297-residue polypeptide: MKELGRLITAMVTPFKKDGTVDYAQAQKLALGLLDSGSDGLVVVGTTGESPTVTWEEEHALFAAVKSAVGNRGKVIAGTGANSTQEALENTLKAEKIGVDACLLVVPYYNKPTQEGLYLHFKTIAEATKLPCILYNVPSRTITHMNPETVIRLSQIPNIVGIKEASGKLDDIAQIINNVRPDFTVWSGNDSDTLPMLAMGSYGVISVASHLVGNQIKDMITSFVSGNTEHAAAIHRHLTPLIRSLFVVSNPIPIKYALNYLGVEVGGLRLPMTEADEKTAALIRESLKGYTIDLPIK.

Threonine 47 is a pyruvate binding site. Catalysis depends on tyrosine 135, which acts as the Proton donor/acceptor. Lysine 163 (schiff-base intermediate with substrate) is an active-site residue. Isoleucine 205 provides a ligand contact to pyruvate.

Belongs to the DapA family. Homotetramer; dimer of dimers.

The protein resides in the cytoplasm. It carries out the reaction L-aspartate 4-semialdehyde + pyruvate = (2S,4S)-4-hydroxy-2,3,4,5-tetrahydrodipicolinate + H2O + H(+). Its pathway is amino-acid biosynthesis; L-lysine biosynthesis via DAP pathway; (S)-tetrahydrodipicolinate from L-aspartate: step 3/4. In terms of biological role, catalyzes the condensation of (S)-aspartate-beta-semialdehyde [(S)-ASA] and pyruvate to 4-hydroxy-tetrahydrodipicolinate (HTPA). The protein is 4-hydroxy-tetrahydrodipicolinate synthase of Dehalococcoides mccartyi (strain ATCC BAA-2100 / JCM 16839 / KCTC 5957 / BAV1).